The chain runs to 413 residues: Succinate--CoA ligase [ADP-forming] subunit beta, mitochondrial (413 aa).

A mitochondrion-targeting transit peptide spans 1 to 2 (RR). The ATP-grasp domain maps to 11-238 (MGLLQEAGIS…SNSAYRQKKI (228 aa)). Residues Lys48 and 55–57 (GRG) contribute to the ATP site. Positions 208 and 222 each coordinate Mg(2+). Substrate-binding positions include Asn273 and 330–332 (GIM).

Belongs to the succinate/malate CoA ligase beta subunit family. ATP-specific subunit beta subfamily. In terms of assembly, heterodimer of an alpha and a beta subunit. The beta subunit determines specificity for ATP. It depends on Mg(2+) as a cofactor. Widely expressed. Not present in liver.

It is found in the mitochondrion. The enzyme catalyses succinate + ATP + CoA = succinyl-CoA + ADP + phosphate. Its pathway is carbohydrate metabolism; tricarboxylic acid cycle; succinate from succinyl-CoA (ligase route): step 1/1. Its function is as follows. ATP-specific succinyl-CoA synthetase functions in the citric acid cycle (TCA), coupling the hydrolysis of succinyl-CoA to the synthesis of ATP and thus represents the only step of substrate-level phosphorylation in the TCA. The beta subunit provides nucleotide specificity of the enzyme and binds the substrate succinate, while the binding sites for coenzyme A and phosphate are found in the alpha subunit. This Columba livia (Rock dove) protein is Succinate--CoA ligase [ADP-forming] subunit beta, mitochondrial.